Here is a 442-residue protein sequence, read N- to C-terminus: tRNA-2-methylthio-N(6)-dimethylallyladenosine synthase (442 aa).

Positions 5–122 constitute an MTTase N-terminal domain; it reads KKVFIKTLGC…LPEMIKQKQK (118 aa). Residues C14, C51, C85, C159, C163, and C166 each coordinate [4Fe-4S] cluster. A Radical SAM core domain is found at 145 to 378; it reads KAEGAKAYVS…DLLNSNAQII (234 aa). The 63-residue stretch at 380-442 folds into the TRAM domain; it reads RQMVGTNQRI…LPNSLRGELI (63 aa).

This sequence belongs to the methylthiotransferase family. MiaB subfamily. In terms of assembly, monomer. [4Fe-4S] cluster is required as a cofactor.

The protein localises to the cytoplasm. It carries out the reaction N(6)-dimethylallyladenosine(37) in tRNA + (sulfur carrier)-SH + AH2 + 2 S-adenosyl-L-methionine = 2-methylsulfanyl-N(6)-dimethylallyladenosine(37) in tRNA + (sulfur carrier)-H + 5'-deoxyadenosine + L-methionine + A + S-adenosyl-L-homocysteine + 2 H(+). Its function is as follows. Catalyzes the methylthiolation of N6-(dimethylallyl)adenosine (i(6)A), leading to the formation of 2-methylthio-N6-(dimethylallyl)adenosine (ms(2)i(6)A) at position 37 in tRNAs that read codons beginning with uridine. This chain is tRNA-2-methylthio-N(6)-dimethylallyladenosine synthase, found in Francisella tularensis subsp. holarctica (strain FTNF002-00 / FTA).